A 336-amino-acid chain; its full sequence is Probable assembly chaperone of rpl4 (336 aa).

TPR repeat units lie at residues 39 to 72 (GRAF…SKNL), 75 to 108 (DQGY…LERL), 110 to 143 (IDKG…QPDA), and 162 to 195 (AEAL…ISRA). Residues 316–336 (DEENEEAEWETSENEEEMDED) form a disordered region.

It belongs to the ACL4 family.

It localises to the cytoplasm. The protein localises to the nucleus. Its subcellular location is the nucleolus. In terms of biological role, acts as a chaperone for the L4 ribosomal subunit encoded by rpl4A and rpl4B, required for hierarchical ribosome assembly. Shields ribosomal protein L4 until timely release and insertion into the pre-ribosome is possible, once ribosomal protein L18 is present. The protein is Probable assembly chaperone of rpl4 of Schizosaccharomyces pombe (strain 972 / ATCC 24843) (Fission yeast).